The primary structure comprises 595 residues: ATP-dependent lipid A-core flippase (595 aa).

Residues 1–20 (MSQAYQPDSTKTSAKKSSAV) form a disordered region. Positions 9 to 19 (STKTSAKKSSA) are enriched in low complexity. 4 consecutive transmembrane segments (helical) span residues 41–61 (WWAI…EIWI), 81–101 (GLFP…SFLG), 169–189 (VIAL…ILFV), and 266–286 (INTP…VWLA). Residues 45–326 (LLTITGFAIN…LTDVNQQLQR (282 aa)) enclose the ABC transmembrane type-1 domain. The 236-residue stretch at 357–592 (IKLDNISLVY…HGHYAQMYAR (236 aa)) folds into the ABC transporter domain. 390-397 (GRSGAGKS) is a binding site for ATP.

Belongs to the ABC transporter superfamily. Lipid exporter (TC 3.A.1.106) family. As to quaternary structure, homodimer.

It is found in the cell inner membrane. It carries out the reaction ATP + H2O + lipid A-core oligosaccharideSide 1 = ADP + phosphate + lipid A-core oligosaccharideSide 2.. In terms of biological role, involved in lipopolysaccharide (LPS) biosynthesis. Translocates lipid A-core from the inner to the outer leaflet of the inner membrane. Transmembrane domains (TMD) form a pore in the inner membrane and the ATP-binding domain (NBD) is responsible for energy generation. The sequence is that of ATP-dependent lipid A-core flippase from Psychrobacter arcticus (strain DSM 17307 / VKM B-2377 / 273-4).